We begin with the raw amino-acid sequence, 553 residues long: MAFPELLDRVGGLGRFQLFQTVALVTPILWVTTQNMLENFSAAVPHHRCWVPLLDNSTSQASIPGDLGPDVLLAVSIPPGPDQQPHQCLRFRQPQWQLTESNATATNWSDAATEPCEDGWVYDHSTFRSTIVTTWDLVCNSQALRPMAQSIFLAGILVGAAVCGHASDRFGRRRVLTWSYLLVSVSGTAAAFMPTFPLYCLFRFLLASAVAGVMMNTASLLMEWTSAQGSPLVMTLNALGFSFGQVLTGSVAYGVRSWRMLQLAVSAPFFLFFVYSWWLPESARWLITVGKLDQGLQELQRVAAVNRRKAEGDTLTMEVLRSAMEEEPSRDKAGASLGTLLHTPGLRHRTIISMLCWFAFGFTFYGLALDLQALGSNIFLLQALIGIVDFPVKTGSLLLISRLGRRFCQVSFLVLPGLCILSNILVPHGMGVLRSALAVLGLGCLGGAFTCITIFSSELFPTVIRMTAVGLCQVAARGGAMLGPLVRLLGVYGSWMPLLVYGVVPVLSGLAALLLPETKNLPLPDTIQDIQKQSVKKVTHDTPDGSILMSTRL.

A helical transmembrane segment spans residues valine 10 to tryptophan 30. Asparagine 56 carries N-linked (GlcNAc...) asparagine glycosylation. 11 helical membrane passes run proline 146 to alanine 166, leucine 182 to phenylalanine 202, phenylalanine 204 to tryptophan 224, leucine 232 to alanine 252, methionine 260 to proline 280, isoleucine 351 to leucine 371, isoleucine 378 to leucine 398, phenylalanine 412 to valine 432, serine 435 to phenylalanine 455, methionine 466 to valine 486, and tryptophan 495 to leucine 515. Serine 534 is modified (phosphoserine). A Phosphothreonine modification is found at threonine 542.

This sequence belongs to the major facilitator (TC 2.A.1) superfamily. Organic cation transporter (TC 2.A.1.19) family. As to quaternary structure, interacts with PDZK1. Post-translationally, N-glycosylated. In terms of tissue distribution, detected in kidney (at protein level). Detected in kidney cortex, in proximal tubules.

The protein localises to the apical cell membrane. It catalyses the reaction urate(out) + (S)-lactate(in) = urate(in) + (S)-lactate(out). The enzyme catalyses nicotinate(in) + urate(out) = nicotinate(out) + urate(in). It carries out the reaction urate(out) + n chloride(in) = urate(in) + n chloride(out). The catalysed reaction is orotate(out) + nicotinate(in) = orotate(in) + nicotinate(out). Electroneutral antiporter that translocates urate across the apical membrane of proximal tubular cells in exchange for monovalent organic or inorganic anions. Involved in renal reabsorption of urate and helps maintaining blood levels of uric acid. Mediates urate uptake by an exchange with organic anions such as (S)-lactate and nicotinate, and inorganic anion Cl(-). Other inorganic anions such as Br(-), I(-) and NO3(-) may also act as counteranions that exchange for urate. Also mediates orotate tubular uptake coupled with nicotinate efflux and to a lesser extent with lactate efflux, therefore displaying a potential role in orotate renal reabsorption. Orotate transport is Cl(-)-dependent. In Mus musculus (Mouse), this protein is Solute carrier family 22 member 12.